The primary structure comprises 431 residues: Enolase (431 aa).

Position 168 (Gln168) interacts with (2R)-2-phosphoglycerate. Glu210 (proton donor) is an active-site residue. 3 residues coordinate Mg(2+): Asp247, Glu291, and Asp318. (2R)-2-phosphoglycerate-binding residues include Lys343, Arg372, Ser373, and Lys394. Catalysis depends on Lys343, which acts as the Proton acceptor.

It belongs to the enolase family. As to quaternary structure, component of the RNA degradosome, a multiprotein complex involved in RNA processing and mRNA degradation. It depends on Mg(2+) as a cofactor.

The protein resides in the cytoplasm. It localises to the secreted. The protein localises to the cell surface. The enzyme catalyses (2R)-2-phosphoglycerate = phosphoenolpyruvate + H2O. The protein operates within carbohydrate degradation; glycolysis; pyruvate from D-glyceraldehyde 3-phosphate: step 4/5. In terms of biological role, catalyzes the reversible conversion of 2-phosphoglycerate (2-PG) into phosphoenolpyruvate (PEP). It is essential for the degradation of carbohydrates via glycolysis. This Acinetobacter baylyi (strain ATCC 33305 / BD413 / ADP1) protein is Enolase.